The sequence spans 446 residues: Maturase K (446 aa).

This sequence belongs to the intron maturase 2 family. MatK subfamily.

The protein resides in the plastid. It is found in the chloroplast. Usually encoded in the trnK tRNA gene intron. Probably assists in splicing its own and other chloroplast group II introns. This chain is Maturase K, found in Phalaenopsis aphrodite subsp. formosana (Moth orchid).